Reading from the N-terminus, the 1395-residue chain is uncharacterized protein (1395 aa).

Position 89 to 96 (89 to 96 (AYKKWGKS)) interacts with ATP. Disordered regions lie at residues 146-166 (EEKIHKKLEGSPSPEAELSPP) and 205-391 (SSSS…MENR). Composition is skewed to low complexity over residues 155–166 (GSPSPEAELSPP) and 205–222 (SSSSSSTAPPASTDTSSP). A compositionally biased stretch (basic and acidic residues) spans 230-269 (EVTKERSSEVPTTVHEKTQSKSKNEKENKFSNGTIEEKPA). Positions 287-301 (SWSSGSSEAGSSSSG) are enriched in low complexity. A compositionally biased stretch (basic residues) spans 313–328 (VKVRHKAREIRNKKGR). Residues 337 to 346 (KHGEKAERNI) show a composition bias toward basic and acidic residues. A compositionally biased stretch (low complexity) spans 349–358 (GSSSSSSSGS). Residues 369-391 (PLKEIGRKDPGSTEGKDLYMENR) are compositionally biased toward basic and acidic residues. Ser814 and Ser1080 each carry phosphoserine. Residues 1110-1132 (PISASELSPGGGSESEFESEKDE) are disordered. Ser1194 and Ser1338 each carry phosphoserine. Basic and acidic residues predominate over residues 1346–1359 (TGERDSGAKSDGFR). The disordered stretch occupies residues 1346–1395 (TGERDSGAKSDGFRGKMCSSASSTSEETGSEGGGEWVGPSEEELFSRTHL).

This is an uncharacterized protein from Homo sapiens (Human).